We begin with the raw amino-acid sequence, 156 residues long: ATP synthase subunit b 2 (156 aa).

Residues 6 to 26 traverse the membrane as a helical segment; it reads SMFGQAISFVIFVWLCMKYVW.

This sequence belongs to the ATPase B chain family. F-type ATPases have 2 components, F(1) - the catalytic core - and F(0) - the membrane proton channel. F(1) has five subunits: alpha(3), beta(3), gamma(1), delta(1), epsilon(1). F(0) has three main subunits: a(1), b(2) and c(10-14). The alpha and beta chains form an alternating ring which encloses part of the gamma chain. F(1) is attached to F(0) by a central stalk formed by the gamma and epsilon chains, while a peripheral stalk is formed by the delta and b chains.

The protein localises to the cell inner membrane. In terms of biological role, f(1)F(0) ATP synthase produces ATP from ADP in the presence of a proton or sodium gradient. F-type ATPases consist of two structural domains, F(1) containing the extramembraneous catalytic core and F(0) containing the membrane proton channel, linked together by a central stalk and a peripheral stalk. During catalysis, ATP synthesis in the catalytic domain of F(1) is coupled via a rotary mechanism of the central stalk subunits to proton translocation. Component of the F(0) channel, it forms part of the peripheral stalk, linking F(1) to F(0). This Vibrio campbellii (strain ATCC BAA-1116) protein is ATP synthase subunit b 2.